A 150-amino-acid chain; its full sequence is Ribosome maturation factor RimP (150 aa).

This sequence belongs to the RimP family.

The protein resides in the cytoplasm. In terms of biological role, required for maturation of 30S ribosomal subunits. In Francisella philomiragia subsp. philomiragia (strain ATCC 25017 / CCUG 19701 / FSC 153 / O#319-036), this protein is Ribosome maturation factor RimP.